Here is a 355-residue protein sequence, read N- to C-terminus: MDDNKKRALAAALGQIERQFGKGAVMRMGDQERQGIPAISTGSLGLDIALGIGGLPKGRIVEIYGPESSGKTTLTLSVIAEAQKNGATCAFVDAEHALDPEYAGKLGVNVDDLLVSQPDTGEQALEITDMLVRSNAVDVIIVDSVAALVPKAEIEGEMGDMHVGLQARLMSQALRKITGNIKNANCLVIFINQIRMKIGVMFGSPETTTGGNALKFYASVRLDIRRTGAVKEGDEVVGSETRVKIVKNKVSPPFRQAEFQILYGKGIYRNGEIIDLGVSQGLVEKSGAWYAYQGNKIGQGKANAAKYLAENPAIGAEIEKQIREKLLKAGAAAEAGKAAAVDASADDVADAEAGY.

65-72 (GPESSGKT) is a binding site for ATP.

Belongs to the RecA family.

It is found in the cytoplasm. In terms of biological role, can catalyze the hydrolysis of ATP in the presence of single-stranded DNA, the ATP-dependent uptake of single-stranded DNA by duplex DNA, and the ATP-dependent hybridization of homologous single-stranded DNAs. It interacts with LexA causing its activation and leading to its autocatalytic cleavage. The polypeptide is Protein RecA (Pseudomonas putida (strain GB-1)).